The chain runs to 179 residues: Translationally-controlled tumor protein homolog (179 aa).

In terms of domain architecture, TCTP spans 1-179 (MIIYKDIISG…WKHGLEEMKV (179 aa)).

The protein belongs to the TCTP family.

The protein resides in the cytoplasm. It localises to the cytoskeleton. Functionally, involved in protein synthesis. Involved in microtubule stabilization. The polypeptide is Translationally-controlled tumor protein homolog (Aspergillus fumigatus (strain ATCC MYA-4609 / CBS 101355 / FGSC A1100 / Af293) (Neosartorya fumigata)).